The following is a 149-amino-acid chain: Small ribosomal subunit protein bS18c (149 aa).

A disordered region spans residues 1-23; the sequence is MDKITGPFRKSKKSFRKPLPPIQ.

It belongs to the bacterial ribosomal protein bS18 family. Part of the 30S ribosomal subunit.

The protein localises to the plastid. This is Small ribosomal subunit protein bS18c from Cuscuta obtusiflora (Peruvian dodder).